Consider the following 234-residue polypeptide: Protein-toxin resistance protein KTD1 (234 aa).

Residues Met1–His47 are Cytoplasmic-facing. Residues Cys48 to Phe68 form a helical membrane-spanning segment. The segment at Phe68–Thr75 is required for resistance to killer toxin K28, a protein-toxin encoded by the M28 virus. Residues His69 to Val76 lie on the Extracellular side of the membrane. A helical membrane pass occupies residues Ile77 to Phe97. The Cytoplasmic segment spans residues Gly98–Pro234. Residues Phe147–Pro234 form a required for resistance to killer toxin K28, a protein-toxin encoded by the M28 virus region. Positions Ser168–Gly187 are disordered. The span at Ala177–Gly187 shows a compositional bias: polar residues. Lys217 participates in a covalent cross-link: Glycyl lysine isopeptide (Lys-Gly) (interchain with G-Cter in ubiquitin).

This sequence belongs to the DUP/COS family.

The protein localises to the vacuole membrane. Its subcellular location is the golgi apparatus. The protein resides in the trans-Golgi network membrane. It localises to the endosome membrane. Its function is as follows. Confers resistance to killer toxin K28, a protein-toxin encoded by the M28 virus that uses S.cerevisiae as a host. Probably acts against K28 after endocytosis of the protein-toxin. The sequence is that of Protein-toxin resistance protein KTD1 from Saccharomyces cerevisiae (strain ATCC 204508 / S288c) (Baker's yeast).